The following is a 180-amino-acid chain: ATP synthase subunit b, plastid (180 aa).

A helical transmembrane segment spans residues 27 to 49 (LVTTLINIAVVLSLLIVFGKGFL).

It belongs to the ATPase B chain family. F-type ATPases have 2 components, F(1) - the catalytic core - and F(0) - the membrane proton channel. F(1) has five subunits: alpha(3), beta(3), gamma(1), delta(1), epsilon(1). F(0) has four main subunits: a(1), b(1), b'(1) and c(10-14). The alpha and beta chains form an alternating ring which encloses part of the gamma chain. F(1) is attached to F(0) by a central stalk formed by the gamma and epsilon chains, while a peripheral stalk is formed by the delta, b and b' chains.

The protein resides in the plastid membrane. In terms of biological role, f(1)F(0) ATP synthase produces ATP from ADP in the presence of a proton or sodium gradient. F-type ATPases consist of two structural domains, F(1) containing the extramembraneous catalytic core and F(0) containing the membrane proton channel, linked together by a central stalk and a peripheral stalk. During catalysis, ATP synthesis in the catalytic domain of F(1) is coupled via a rotary mechanism of the central stalk subunits to proton translocation. Functionally, component of the F(0) channel, it forms part of the peripheral stalk, linking F(1) to F(0). This Cuscuta gronovii (Common dodder) protein is ATP synthase subunit b, plastid.